A 629-amino-acid chain; its full sequence is tRNA uridine 5-carboxymethylaminomethyl modification enzyme MnmG (629 aa).

FAD is bound by residues 13 to 18, Val125, and Ser180; that span reads GGGHAG. 273–287 is a binding site for NAD(+); sequence GPRYCPSIEDKVMRF. FAD is bound at residue Gln370.

It belongs to the MnmG family. Homodimer. Heterotetramer of two MnmE and two MnmG subunits. Requires FAD as cofactor.

The protein localises to the cytoplasm. Functionally, NAD-binding protein involved in the addition of a carboxymethylaminomethyl (cmnm) group at the wobble position (U34) of certain tRNAs, forming tRNA-cmnm(5)s(2)U34. This Shigella flexneri serotype 5b (strain 8401) protein is tRNA uridine 5-carboxymethylaminomethyl modification enzyme MnmG.